The primary structure comprises 455 residues: Keratin, type I cuticular Ha5 (455 aa).

Positions 1-97 (MASKCLKASF…FGEGILTGNE (97 aa)) are head. In terms of domain architecture, IF rod spans 97 to 408 (EKETMQSLND…GLLESEDSKL (312 aa)). The coil 1A stretch occupies residues 98-132 (KETMQSLNDRLASYLEKVRQLEQENASLESRIREW). The linker 1 stretch occupies residues 133–143 (CEQQVPYMCPD). Positions 144-244 (YQSYFRTMEE…HEEEVNSLRC (101 aa)) are coil 1B. Residues 245-260 (QLGDRLNVEVDAAPPV) form a linker 12 region. A coil 2 region spans residues 261-404 (DLNRVLDEMR…NTYRGLLESE (144 aa)). The tract at residues 405-455 (DSKLPCNPCAPDYSSSKSCLPCLPAVSCSTGAARTTCSPRPVCVPCPGGRF) is tail.

Belongs to the intermediate filament family.

In Mus musculus (Mouse), this protein is Keratin, type I cuticular Ha5.